A 305-amino-acid polypeptide reads, in one-letter code: tRNA dimethylallyltransferase (305 aa).

Residue 8-15 (GPTASGKT) participates in ATP binding. Substrate is bound at residue 10-15 (TASGKT). The tract at residues 33–36 (DSQQ) is interaction with substrate tRNA.

Belongs to the IPP transferase family. Monomer. Requires Mg(2+) as cofactor.

The catalysed reaction is adenosine(37) in tRNA + dimethylallyl diphosphate = N(6)-dimethylallyladenosine(37) in tRNA + diphosphate. In terms of biological role, catalyzes the transfer of a dimethylallyl group onto the adenine at position 37 in tRNAs that read codons beginning with uridine, leading to the formation of N6-(dimethylallyl)adenosine (i(6)A). The sequence is that of tRNA dimethylallyltransferase from Anaeromyxobacter sp. (strain K).